Consider the following 266-residue polypeptide: Type 1 encapsulin shell protein (266 aa).

Belongs to the encapsulin family. Family 1 subfamily. As to quaternary structure, homomultimeric. This encapsulin nanocompartment is formed by 60 subunits, and encloses one Dyp homohexamer; partially assembled 58-subunit compartments with and without cargo are also purified. May assemble the shell from dimers. Monomers form pentamers, which assemble to form hollow shells with pores 5-8 Angstroms in diameter where 3 pentamers meet.

It is found in the encapsulin nanocompartment. In terms of biological role, shell component of a type 1 encapsulin nanocompartment. Assembles into proteinaceous shells 23-24 nm in diameter with 2-2.5 nm thick walls. Endogenous cargo protein DyP (dye-decolorizing peroxidase) is targeted to the interior via its C-terminal extension; only 1 DyP hexamer is incorporated into each shell. Empty shells can be isolated in the absence of cargo. Cargo encapsulation probably precedes assembly of the nanocompartment; may assemble or disassemble via dimers, subcomplexes with a distinct preference for even numbers of subunits are detected. Nanocompartments are stable against mechanical forces; loaded nanocompartments are less stable than empty ones. Nanocompartments are stable between pH 5-10; they aggregate at pH 9-10 and start to disassemble at pH 11. They are stable in 1M NaCl, 1 M MgCl(2) and 1M CaCl(2), unstable in 20% DMSO (dimethylsulfoxide) and are stable in 20% but not 40% ethanol. In Brevibacterium linens, this protein is Type 1 encapsulin shell protein.